The sequence spans 183 residues: Protein Syd (183 aa).

Belongs to the Syd family.

The protein localises to the cell inner membrane. Interacts with the SecY protein in vivo. May bind preferentially to an uncomplexed state of SecY, thus functioning either as a chelating agent for excess SecY in the cell or as a regulatory factor that negatively controls the translocase function. The polypeptide is Protein Syd (Yersinia pseudotuberculosis serotype O:1b (strain IP 31758)).